The following is a 378-amino-acid chain: Flap endonuclease 1 (378 aa).

The segment at 1–104 is N-domain; that stretch reads MGVKDLSKVI…SELEKRTERR (104 aa). A Mg(2+)-binding site is contributed by aspartate 34. Positions 47 and 70 each coordinate DNA. Aspartate 86 provides a ligand contact to Mg(2+). The interval 90 to 113 is disordered; that stretch reads PQMKTSELEKRTERRTEAEKQRND. A compositionally biased stretch (basic and acidic residues) spans 95-113; sequence SELEKRTERRTEAEKQRND. The segment at 122 to 253 is I-domain; the sequence is SVNKFEKRLV…KKAFELIKKY (132 aa). The Mg(2+) site is built by glutamate 158, glutamate 160, aspartate 179, and aspartate 181. Glutamate 158 serves as a coordination point for DNA. Positions 231 and 233 each coordinate DNA. Position 233 (aspartate 233) interacts with Mg(2+). The interval 336–344 is interaction with PCNA; it reads QQARIDSFF. Residues 348–378 are disordered; the sequence is KVVTSETTKRKNEEKNNLKKRGPSLGKKAKK. Residues 354–364 show a composition bias toward basic and acidic residues; it reads TTKRKNEEKNN. Over residues 365-378 the composition is skewed to basic residues; it reads LKKRGPSLGKKAKK.

The protein belongs to the XPG/RAD2 endonuclease family. FEN1 subfamily. Interacts with PCNA. Three molecules of FEN1 bind to one PCNA trimer with each molecule binding to one PCNA monomer. PCNA stimulates the nuclease activity without altering cleavage specificity. Requires Mg(2+) as cofactor. In terms of processing, phosphorylated. Phosphorylation upon DNA damage induces relocalization to the nuclear plasma.

It is found in the nucleus. It localises to the nucleolus. Its subcellular location is the nucleoplasm. The protein resides in the mitochondrion. Structure-specific nuclease with 5'-flap endonuclease and 5'-3' exonuclease activities involved in DNA replication and repair. During DNA replication, cleaves the 5'-overhanging flap structure that is generated by displacement synthesis when DNA polymerase encounters the 5'-end of a downstream Okazaki fragment. It enters the flap from the 5'-end and then tracks to cleave the flap base, leaving a nick for ligation. Also involved in the long patch base excision repair (LP-BER) pathway, by cleaving within the apurinic/apyrimidinic (AP) site-terminated flap. Acts as a genome stabilization factor that prevents flaps from equilibrating into structures that lead to duplications and deletions. Also possesses 5'-3' exonuclease activity on nicked or gapped double-stranded DNA, and exhibits RNase H activity. Also involved in replication and repair of rDNA and in repairing mitochondrial DNA. This is Flap endonuclease 1 from Brugia malayi (Filarial nematode worm).